The following is a 355-amino-acid chain: Gentisate 1,2-dioxygenase (355 aa).

Positions 106-174 constitute a Cupin type-2 domain; the sequence is MQLLLPGEWA…GNEPVVWLDV (69 aa).

The protein belongs to the gentisate 1,2-dioxygenase family.

The enzyme catalyses 2,5-dihydroxybenzoate + O2 = 3-maleylpyruvate + H(+). The protein operates within aromatic compound metabolism; naphthalene degradation. Functionally, catalyzes the oxygen-dependent ring fission of gentisate between the carboxyl and proximal hydroxyl groups at positions 1 and 2 of the aromatic ring to form maleylpyruvate. Can also catalyze oxidation of alkyl- and halogenated gentisates. Exhibits higher affinity for 3-substituted gentisates than for gentisate but has higher activity with gentisate. In Ralstonia sp, this protein is Gentisate 1,2-dioxygenase.